The sequence spans 313 residues: Tyrosine recombinase XerD (313 aa).

The Core-binding (CB) domain maps to 17 to 102 (EDNDVIIEQF…TLRRFFQYLY (86 aa)). Residues 123–307 (RLPKDLSEQQ…ATERLKVLHQ (185 aa)) form the Tyr recombinase domain. Active-site residues include R163, K187, H259, R262, and H285. Residue Y294 is the O-(3'-phospho-DNA)-tyrosine intermediate of the active site.

The protein belongs to the 'phage' integrase family. XerD subfamily. As to quaternary structure, forms a cyclic heterotetrameric complex composed of two molecules of XerC and two molecules of XerD, in which XerC interacts with XerD via its C-terminal region, XerD interacts with XerC via its C-terminal region and so on.

It is found in the cytoplasm. FtsK may regulate the catalytic switch between XerC and XerD in the heterotetrameric complex during the two steps of the recombination process. In terms of biological role, site-specific tyrosine recombinase, which acts by catalyzing the cutting and rejoining of the recombining DNA molecules. Binds cooperatively to specific DNA consensus sequences that are separated from XerC binding sites by a short central region, forming the heterotetrameric XerC-XerD complex that recombines DNA substrates. The complex is essential to convert dimers of the bacterial chromosome into monomers to permit their segregation at cell division. It also contributes to the segregational stability of plasmids. In the complex XerD specifically exchanges the bottom DNA strands. This Proteus mirabilis protein is Tyrosine recombinase XerD.